We begin with the raw amino-acid sequence, 172 residues long: Dehydratase cfoI (172 aa).

Residues H86 and H111 contribute to the active site.

This sequence belongs to the scytalone dehydratase family. As to quaternary structure, homotrimer. Each subunit contains an active site, located in the central part of the hydrophobic core of the monomer, which functions independently.

The protein operates within secondary metabolite biosynthesis; flavonoid biosynthesis. Cytochrome P450 monooxygenase; part of the gene cluster that mediates the biosynthesis of chlorflavonin, a fungal flavonoid with acetolactate synthase inhibitory activity. Within the pathway, cfoI is responsible for the hydroxylation of the flavonoid skeleton at position C3 with cfoF. The pathway begins with the PKS-NRPS hybrid synthetase cfoA that uses benzoic acid or p-hydroxybenzoic acid as a starter unit with four rounds of chain elongation using malonyl-CoA to form the chalcone skeleton. Then, a new type of chalcone isomerase, cfoK, catalyzes the conversion of the chalcone into a flavanone by a histidine-mediated oxa-Michael addition mechanism. The desaturation of flavanone to flavone is catalyzed by a new type of flavone synthase, the flavin mononucleotide (FMN)-dependent oxidoreductase cfoJ. Monooxygenases cfoF, cfoG, and P450 cfoH are responsible for the hydroxylation of the flavonoid skeleton at sites C3, C8, and C2', respectively. Like cfoF, the dehydratase cfoI plays also a role in the hydroxylation of position C3. Methyltransferases cfoB, cfoC, and cfoD then catalyze the methylation of C7-OH, C8-OH, and C3-OH, respectively. Finally, the monooxygenase cfoE is responsible for the chlorination of flavonoid at position C3'. The sequence is that of Dehydratase cfoI from Aspergillus candidus.